The following is a 144-amino-acid chain: Large ribosomal subunit protein uL11 (144 aa).

This sequence belongs to the universal ribosomal protein uL11 family. Part of the ribosomal stalk of the 50S ribosomal subunit. Interacts with L10 and the large rRNA to form the base of the stalk. L10 forms an elongated spine to which L12 dimers bind in a sequential fashion forming a multimeric L10(L12)X complex. One or more lysine residues are methylated.

Forms part of the ribosomal stalk which helps the ribosome interact with GTP-bound translation factors. This Neisseria meningitidis serogroup C (strain 053442) protein is Large ribosomal subunit protein uL11.